We begin with the raw amino-acid sequence, 377 residues long: Protein MULTIPOLAR SPINDLE 1 (377 aa).

Residues 117-124 (LRRRFLRL) carry the Nuclear localization signal motif.

As to expression, expressed in roots, stems, leaves, inflorescences and seedlings. Strongly expressed in meiocytes.

The protein resides in the nucleus. It localises to the cytoplasm. It is found in the cytoskeleton. Its subcellular location is the spindle. In terms of biological role, involved in meiotic spindle organization in meiocytes thus regulating chromosome segregation. Required for formation of meiotic DNA double-strand breaks (DSBs) during early recombination processes. The chain is Protein MULTIPOLAR SPINDLE 1 from Arabidopsis thaliana (Mouse-ear cress).